A 241-amino-acid polypeptide reads, in one-letter code: Venom nerve growth factor (241 aa).

A signal peptide spans 1–18 (MSMLCYTLIIAFLIGIWA). Positions 19–122 (APKSEDNVPL…SLNRNIRAKR (104 aa)) are excised as a propeptide. 3 disulfide bridges follow: cysteine 136-cysteine 201, cysteine 179-cysteine 229, and cysteine 189-cysteine 231. The N-linked (GlcNAc...) asparagine glycan is linked to asparagine 145.

The protein belongs to the NGF-beta family. Homodimer; non-covalently linked. As to expression, expressed by the venom gland.

The protein localises to the secreted. Nerve growth factor is important for the development and maintenance of the sympathetic and sensory nervous systems. It stimulates division and differentiation of sympathetic and embryonic sensory neurons as well as basal forebrain cholinergic neurons in the brain. Its relevance in the snake venom is not clear. However, it has been shown to inhibit metalloproteinase-dependent proteolysis of platelet glycoprotein Ib alpha, suggesting a metalloproteinase inhibition to prevent metalloprotease autodigestion and/or protection against prey proteases. Binds a lipid between the two protein chains in the homodimer. The lipid-bound form promotes histamine relase from mouse mast cells, contrary to the lipid-free form. The sequence is that of Venom nerve growth factor from Crotalus durissus terrificus (South American rattlesnake).